Reading from the N-terminus, the 465-residue chain is Cysteine--tRNA ligase (465 aa).

Cys-28 contacts Zn(2+). Positions Met-30 to His-40 match the 'HIGH' region motif. Residues Cys-209, His-234, and Glu-238 each contribute to the Zn(2+) site. The 'KMSKS' region motif lies at Lys-266–Ser-270. Lys-269 lines the ATP pocket.

Belongs to the class-I aminoacyl-tRNA synthetase family. As to quaternary structure, monomer. Zn(2+) serves as cofactor.

Its subcellular location is the cytoplasm. The enzyme catalyses tRNA(Cys) + L-cysteine + ATP = L-cysteinyl-tRNA(Cys) + AMP + diphosphate. The chain is Cysteine--tRNA ligase from Methylococcus capsulatus (strain ATCC 33009 / NCIMB 11132 / Bath).